The following is a 292-amino-acid chain: Ribosomal RNA small subunit methyltransferase A (292 aa).

Residues Asn29, Leu31, Gly56, Glu77, Asp102, and Asn127 each coordinate S-adenosyl-L-methionine.

This sequence belongs to the class I-like SAM-binding methyltransferase superfamily. rRNA adenine N(6)-methyltransferase family. RsmA subfamily.

It is found in the cytoplasm. It carries out the reaction adenosine(1518)/adenosine(1519) in 16S rRNA + 4 S-adenosyl-L-methionine = N(6)-dimethyladenosine(1518)/N(6)-dimethyladenosine(1519) in 16S rRNA + 4 S-adenosyl-L-homocysteine + 4 H(+). Its function is as follows. Specifically dimethylates two adjacent adenosines (A1518 and A1519) in the loop of a conserved hairpin near the 3'-end of 16S rRNA in the 30S particle. May play a critical role in biogenesis of 30S subunits. In Bacillus subtilis (strain 168), this protein is Ribosomal RNA small subunit methyltransferase A.